A 344-amino-acid chain; its full sequence is Meiotic expression up-regulated protein 26 (344 aa).

It localises to the nucleus. The polypeptide is Meiotic expression up-regulated protein 26 (meu26) (Schizosaccharomyces pombe (strain 972 / ATCC 24843) (Fission yeast)).